A 268-amino-acid polypeptide reads, in one-letter code: Expansin-B3 (268 aa).

An N-terminal signal peptide occupies residues 1-25 (MAFSISKKAAVAALFSFLVVTCVAG). The N-linked (GlcNAc...) asparagine glycan is linked to Asn-30. Residues 62–168 (GGACGFKNTN…KRVPCNFPGL (107 aa)) form the Expansin-like EG45 domain. Cystine bridges form between Cys-65/Cys-93, Cys-96/Cys-163, and Cys-101/Cys-107. Residues 181–262 (VYFAVLVEYE…NWAPMAVYRS (82 aa)) enclose the Expansin-like CBD domain. Residue Asn-238 is glycosylated (N-linked (GlcNAc...) asparagine).

It belongs to the expansin family. Expansin B subfamily. As to expression, expressed in roots, coleoptiles and internodes.

Its subcellular location is the secreted. It localises to the cell wall. It is found in the membrane. In terms of biological role, may cause loosening and extension of plant cell walls by disrupting non-covalent bonding between cellulose microfibrils and matrix glucans. No enzymatic activity has been found. May be required for rapid internodal elongation in deepwater rice during submergence. The protein is Expansin-B3 (EXPB3) of Oryza sativa subsp. japonica (Rice).